Consider the following 100-residue polypeptide: MELTPREKDKLLIFTAALLAERRRARGLKLNYPEAVALITAAIMEGARDGRTVAELMHEGTTVLAREDVMDGVAEMIPEIQVEATFPDGTKLVTVHHPIV.

It belongs to the urease gamma subunit family. Heterotrimer of UreA (gamma), UreB (beta) and UreC (alpha) subunits. Three heterotrimers associate to form the active enzyme.

Its subcellular location is the cytoplasm. The enzyme catalyses urea + 2 H2O + H(+) = hydrogencarbonate + 2 NH4(+). The protein operates within nitrogen metabolism; urea degradation; CO(2) and NH(3) from urea (urease route): step 1/1. The chain is Urease subunit gamma from Cupriavidus metallidurans (strain ATCC 43123 / DSM 2839 / NBRC 102507 / CH34) (Ralstonia metallidurans).